The following is a 987-amino-acid chain: MSDNEKSTQTEEPNFRYNAALAQDIENKWQKIWDEQGTFWAANVNGDLKDGKGRNAEGRTAYFAMDMFPYPSGKGLHVGHPLGYLASDVVSRYHRMKGENVLHAMGYDAFGLPAEQYAVQTGQHPRVTTEANIANMSRQLHRMGLSFDNRRTFATIDPGYVRWTQWIFSRIYDSWYDEDATNPSGSKGSARPIAELVAKFESGEKAIPGHESDGKQWSDLTDAEQQDILNDFRLAYISKSPVNWCPGLGTVLANEEVTAEGKSERGNFPVFQRELRQWSMRITKYGHRLIADLDGINWPEKVKLMQRNWIGESHGASVHFTVATADGDKDMEIYTTRPDTLFGTTFAVVSPEHHLLENVPAEWPADVPEDWKGGYANPVEAVKAYRLAAEAKTAKDRVNEAGEKTGLFTGLYATNPITGAKLPLFTADYVLMDYGTGAIMAVPGGDQRDYDFAVKFGLPVIYTVTPLPDSGDDLANYEGKAPFVSHDGIVINSSVEATEAKGDALSLNGLRVDDAIAKVNAWLESAGVGKGTVSYRLRDWLFSRQRYWGEPFPIVYGEDGTPHLLPDSALPINLPDVPDYEPRTFDPMDAESNPEAPLSRNEDWVKVELDLGDGKKTYYRDTNTMPNWAGSCWYYMRYIDPTDTKHMVEKDEFDYWMGPNHNKYSGDEGGVDLYIGGVEHAVLHLLYSRFWHKVLFDLGYVDSAEPFHKLFNQGMIQAYAYTDDRGQYVPADEVVEGPADASGEPTFTWNGEHANREFGKMGKSLKNIVTPDYMYENYGADTFRLYEMSMGPLDESRPWNTRNVVGGMRFLQRLWRNVVDETTGQAHVTEDTPDEKTLKLLNNTIAEVTAEMEGMRPNTAIAKLIVLNNHLTGLKAVPRAAVEPLILMLAPIAPHICEEMWSKLGHAESLSAEPWPVADERYVGHDTVTAVVQIKGKVRAKLEVPVDIDPADLEKQALAAVADRLGGKEPRKVIVKAPKIVSIVPAE.

A 'HIGH' region motif is present at residues 69-80; sequence PYPSGKGLHVGH. The 'KMSKS' region signature appears at 760–764; that stretch reads KMGKS. ATP is bound at residue K763.

The protein belongs to the class-I aminoacyl-tRNA synthetase family.

It localises to the cytoplasm. The catalysed reaction is tRNA(Leu) + L-leucine + ATP = L-leucyl-tRNA(Leu) + AMP + diphosphate. The protein is Leucine--tRNA ligase of Bifidobacterium longum (strain DJO10A).